The following is a 269-amino-acid chain: Chymotrypsin-like elastase family member 2A (269 aa).

The N-terminal stretch at 1–16 (MIRTLLLSTLVAGALS) is a signal peptide. Residues 17-28 (CGDPTYPPYVTR) constitute a propeptide, activation peptide. The 239-residue stretch at 29-267 (VVGGEEARPN…YIDWINSVIA (239 aa)) folds into the Peptidase S1 domain. A disulfide bridge connects residues cysteine 58 and cysteine 74. Residues histidine 73 and aspartate 121 each act as charge relay system in the active site. Disulfide bonds link cysteine 155/cysteine 222, cysteine 186/cysteine 202, and cysteine 212/cysteine 243. The active-site Charge relay system is the serine 216.

This sequence belongs to the peptidase S1 family. Elastase subfamily. In terms of assembly, interacts with CPA1. Interacts with SERPINA1. Expressed in pancreas. Not detected in keratinocytes. Detected in exocrine secretions of the pancreas (at protein level). Also expressed in a small fraction of cells in pancreatic islets, adrenal cortex, intestinal glands and colonic lymphoid follicles (at protein level). Detected in plasma.

Its subcellular location is the secreted. It catalyses the reaction Preferential cleavage: Leu-|-Xaa, Met-|-Xaa and Phe-|-Xaa. Hydrolyzes elastin.. In terms of biological role, elastase that enhances insulin signaling and might have a physiologic role in cellular glucose metabolism. Circulates in plasma and reduces platelet hyperactivation, triggers both insulin secretion and degradation, and increases insulin sensitivity. The sequence is that of Chymotrypsin-like elastase family member 2A from Homo sapiens (Human).